Consider the following 258-residue polypeptide: Caffeoyl-CoA O-methyltransferase 1 (258 aa).

Residues 1-16 (MATTATEAAPAQEQQA) are compositionally biased toward low complexity. The interval 1 to 31 (MATTATEAAPAQEQQANGNGEQKTRHSEVGH) is disordered. The segment covering 22–31 (QKTRHSEVGH) has biased composition (basic and acidic residues). Lys32 lines the substrate pocket. Residues Thr74, Glu96, 98–99 (GV), Ser104, Asp122, and Ala151 each bind S-adenosyl-L-methionine. Substrate is bound at residue Asp174. Asp174 provides a ligand contact to a divalent metal cation. Asp176 contacts S-adenosyl-L-methionine. Residues Asp200 and Asn201 each contribute to the a divalent metal cation site. Asn205 lines the substrate pocket.

The protein belongs to the class I-like SAM-binding methyltransferase superfamily. Cation-dependent O-methyltransferase family. CCoAMT subfamily. A divalent metal cation serves as cofactor.

The catalysed reaction is (E)-caffeoyl-CoA + S-adenosyl-L-methionine = (E)-feruloyl-CoA + S-adenosyl-L-homocysteine + H(+). It participates in aromatic compound metabolism; phenylpropanoid biosynthesis. Methylates caffeoyl-CoA to feruloyl-CoA and 5-hydroxyferuloyl-CoA to sinapoyl-CoA. Plays a role in the synthesis of feruloylated polysaccharides. Involved in the reinforcement of the plant cell wall. Also involved in the responding to wounding or pathogen challenge by the increased formation of cell wall-bound ferulic acid polymers. This is Caffeoyl-CoA O-methyltransferase 1 (CCOAOMT1) from Zea mays (Maize).